The following is a 256-amino-acid chain: Ribonuclease 3 (256 aa).

Residues 6–128 enclose the RNase III domain; that stretch reads LATLETRLDH…LFGAVFLDAG (123 aa). Residue glutamate 41 participates in Mg(2+) binding. Residue aspartate 45 is part of the active site. Positions 114 and 117 each coordinate Mg(2+). Glutamate 117 is a catalytic residue. Residues 155 to 225 enclose the DRBM domain; that stretch reads DAKTLLQEFL…AKVALEAAQA (71 aa).

The protein belongs to the ribonuclease III family. Homodimer. Mg(2+) is required as a cofactor.

The protein resides in the cytoplasm. It catalyses the reaction Endonucleolytic cleavage to 5'-phosphomonoester.. Functionally, digests double-stranded RNA. Involved in the processing of primary rRNA transcript to yield the immediate precursors to the large and small rRNAs (23S and 16S). Processes some mRNAs, and tRNAs when they are encoded in the rRNA operon. Processes pre-crRNA and tracrRNA of type II CRISPR loci if present in the organism. This Bordetella bronchiseptica (strain ATCC BAA-588 / NCTC 13252 / RB50) (Alcaligenes bronchisepticus) protein is Ribonuclease 3.